The chain runs to 105 residues: ATP-dependent Clp protease adapter protein ClpS (105 aa).

This sequence belongs to the ClpS family. As to quaternary structure, binds to the N-terminal domain of the chaperone ClpA.

Involved in the modulation of the specificity of the ClpAP-mediated ATP-dependent protein degradation. This Aeromonas salmonicida (strain A449) protein is ATP-dependent Clp protease adapter protein ClpS.